A 157-amino-acid chain; its full sequence is Phospholipase A2 phaiodactylipin (157 aa).

Ca(2+)-binding residues include tryptophan 34 and glycine 36. 5 disulfide bridges follow: cysteine 35–cysteine 56, cysteine 55–cysteine 94, cysteine 62–cysteine 87, cysteine 85–cysteine 127, and cysteine 132–cysteine 143. Residue asparagine 43 is glycosylated (N-linked (GlcNAc...) asparagine). Histidine 59 is a catalytic residue. Residue aspartate 60 coordinates Ca(2+). Residue aspartate 88 is part of the active site. An N-linked (GlcNAc...) asparagine glycan is attached at asparagine 101. The propeptide at 134-139 is removed in mature form; sequence DEKSAR. The N-linked (GlcNAc...) asparagine glycan is linked to asparagine 153.

The protein belongs to the phospholipase A2 family. Group III subfamily. As to quaternary structure, heterodimer composed of a small subunit and a large subunit; disulfide-linked. Requires Ca(2+) as cofactor. As to expression, expressed by the venom gland.

It localises to the secreted. It carries out the reaction a 1,2-diacyl-sn-glycero-3-phosphocholine + H2O = a 1-acyl-sn-glycero-3-phosphocholine + a fatty acid + H(+). Its function is as follows. Scorpion venom phospholipase A2 (PLA2) that is lethal to crickets and crustaceae. Causes inflammation in mice and lysis of human erythrocytes. Has a mild anticoagulant effect on human platelets. PLA2 catalyzes the calcium-dependent hydrolysis of the 2-acyl groups in 3-sn-phosphoglycerides. The chain is Phospholipase A2 phaiodactylipin from Anuroctonus phaiodactylus (Mafia scorpion).